A 302-amino-acid chain; its full sequence is Nucleotide-binding protein Rsph17025_2562 (302 aa).

Residue 15–22 coordinates ATP; the sequence is GPSGAGRT. 62 to 65 lines the GTP pocket; sequence DVRN.

It belongs to the RapZ-like family.

In terms of biological role, displays ATPase and GTPase activities. In Cereibacter sphaeroides (strain ATCC 17025 / ATH 2.4.3) (Rhodobacter sphaeroides), this protein is Nucleotide-binding protein Rsph17025_2562.